The primary structure comprises 22 residues: Antimicrobial peptide 4 (22 aa).

As to expression, expressed by the skin glands.

It localises to the secreted. Has very strong antimicrobial activity against Gram-positive bacterium S.aureus and yeast C.albicans, and very weak activity against Gram-negative bacterium E.coli. Has strong hemolytic activity against human red blood cells. The chain is Antimicrobial peptide 4 from Xenopus tropicalis (Western clawed frog).